The sequence spans 88 residues: Small ribosomal subunit protein bS20 (88 aa).

This sequence belongs to the bacterial ribosomal protein bS20 family.

Functionally, binds directly to 16S ribosomal RNA. The chain is Small ribosomal subunit protein bS20 from Methylorubrum populi (strain ATCC BAA-705 / NCIMB 13946 / BJ001) (Methylobacterium populi).